The primary structure comprises 306 residues: Putative S-adenosyl-L-methionine-dependent methyltransferase FRAAL5401 (306 aa).

S-adenosyl-L-methionine contacts are provided by residues aspartate 126 and 155 to 156 (DL). The tract at residues 201–225 (LSAPESRVATENRPNPKPGDEDRTK) is disordered.

It belongs to the UPF0677 family.

Its function is as follows. Exhibits S-adenosyl-L-methionine-dependent methyltransferase activity. This is Putative S-adenosyl-L-methionine-dependent methyltransferase FRAAL5401 from Frankia alni (strain DSM 45986 / CECT 9034 / ACN14a).